An 822-amino-acid chain; its full sequence is Nose resistant to fluoxetine protein 6 (822 aa).

The first 24 residues, 1-24 (MGNMRRLLIFAVLVILTVISNSKS), serve as a signal peptide directing secretion. Asparagine 236 carries an N-linked (GlcNAc...) asparagine glycan. The next 3 helical transmembrane spans lie at 306 to 326 (LAMF…FGTL), 617 to 637 (PYIR…LNAW), and 655 to 675 (IICW…LYWF).

This sequence belongs to the acyltransferase 3 family. As to expression, in L1 larvae through to adult, hyp3 and hyp5, the most anterior cells in the hypodermis, and in intestine. Other hypodermal cells show weaker expression.

The protein localises to the membrane. Functionally, plays a role in the uptake of a range of molecules including lipids and xenobiotic compounds from the intestine to surrounding tissues. Mediates transport of lipids from intestine to the reproductive tract. Required for efficient yolk transport into oocytes. Vital for embryonic development. The polypeptide is Nose resistant to fluoxetine protein 6 (nrf-6) (Caenorhabditis elegans).